The primary structure comprises 249 residues: tRNA pseudouridine synthase A (249 aa).

Asp-53 serves as the catalytic Nucleophile. A substrate-binding site is contributed by Tyr-111.

Belongs to the tRNA pseudouridine synthase TruA family. Homodimer.

It catalyses the reaction uridine(38/39/40) in tRNA = pseudouridine(38/39/40) in tRNA. Formation of pseudouridine at positions 38, 39 and 40 in the anticodon stem and loop of transfer RNAs. In Streptococcus pneumoniae serotype 19F (strain G54), this protein is tRNA pseudouridine synthase A.